Here is an 81-residue protein sequence, read N- to C-terminus: MSHSVKIYDTCIGCTQCVRACPTDVLEMVPWDGCKASQIASAPRTEDCVGCKRCESACPTDFLSVRVYLGSETTRSMGLAY.

4Fe-4S ferredoxin-type domains lie at 2–31 (SHSV…MVPW) and 39–68 (IASA…VRVY). Cys11, Cys14, Cys17, Cys21, Cys48, Cys51, Cys54, and Cys58 together coordinate [4Fe-4S] cluster.

As to quaternary structure, the eukaryotic PSI reaction center is composed of at least 11 subunits. [4Fe-4S] cluster serves as cofactor.

The protein localises to the plastid. It localises to the chloroplast thylakoid membrane. It carries out the reaction reduced [plastocyanin] + hnu + oxidized [2Fe-2S]-[ferredoxin] = oxidized [plastocyanin] + reduced [2Fe-2S]-[ferredoxin]. Apoprotein for the two 4Fe-4S centers FA and FB of photosystem I (PSI); essential for photochemical activity. FB is the terminal electron acceptor of PSI, donating electrons to ferredoxin. The C-terminus interacts with PsaA/B/D and helps assemble the protein into the PSI complex. Required for binding of PsaD and PsaE to PSI. PSI is a plastocyanin/cytochrome c6-ferredoxin oxidoreductase, converting photonic excitation into a charge separation, which transfers an electron from the donor P700 chlorophyll pair to the spectroscopically characterized acceptors A0, A1, FX, FA and FB in turn. This is Photosystem I iron-sulfur center from Pleurastrum terricola (Filamentous green alga).